The chain runs to 1489 residues: ZEB2-regulated ABC transporter 1 (1489 aa).

The disordered stretch occupies residues 1 to 55; that stretch reads MALPEANMSSTRSEQSSRSHDTIVGNEQPHSEKPAASAPGDQMSSDDEDEGPQTE. A glycan (N-linked (GlcNAc...) asparagine) is linked at asparagine 7. The segment covering 44–53 has biased composition (acidic residues); that stretch reads SSDDEDEGPQ. Residues asparagine 70, asparagine 73, asparagine 118, asparagine 332, and asparagine 469 are each glycosylated (N-linked (GlcNAc...) asparagine). The ABC transporter 1 domain maps to 152-408; it reads LGLPDMVHQM…FINLGFECPD (257 aa). A run of 5 helical transmembrane segments spans residues 513-533, 552-572, 599-619, 628-648, and 662-682; these read LLGS…VAFI, GATL…EILT, ILVD…TLYF, GAFF…SGVF, and MVPA…VVPV. The N-linked (GlcNAc...) asparagine glycan is linked to asparagine 714. The chain crosses the membrane as a helical span at residues 773 to 793; the sequence is GILIAMTIFNHVVYIVATEFI. The segment at 811-834 is disordered; sequence PSKAKSDPEASSSRPIPTTEKNNN. A compositionally biased stretch (polar residues) spans 819-834; sequence EASSSRPIPTTEKNNN. Residues 846 to 1088 enclose the ABC transporter 2 domain; sequence FHWNDVCYDI…TLTNYFVKHG (243 aa). Position 882–889 (882–889) interacts with ATP; the sequence is GVSGAGKT. Helical transmembrane passes span 1190–1210, 1218–1238, 1269–1289, 1307–1327, and 1333–1353; these read ALCI…PLSL, FAIF…MPHF, IPWN…PVGF, WLLI…AIAI, and AGGN…GVLA. Residue asparagine 1402 is glycosylated (N-linked (GlcNAc...) asparagine). The chain crosses the membrane as a helical span at residues 1457–1477; the sequence is GIGMVYIVVNIVGALFLYWLI.

It belongs to the ABC transporter superfamily. ABCG family. PDR (TC 3.A.1.205) subfamily.

The protein resides in the cell membrane. It is found in the vacuole membrane. Functionally, ABC transporter involved in zearalenone production. The sequence is that of ZEB2-regulated ABC transporter 1 from Gibberella zeae (strain ATCC MYA-4620 / CBS 123657 / FGSC 9075 / NRRL 31084 / PH-1) (Wheat head blight fungus).